The following is a 163-amino-acid chain: N5-carboxyaminoimidazole ribonucleotide mutase (163 aa).

Substrate contacts are provided by Ser11, Asp14, and Arg41.

It belongs to the AIR carboxylase family. Class I subfamily.

The catalysed reaction is 5-carboxyamino-1-(5-phospho-D-ribosyl)imidazole + H(+) = 5-amino-1-(5-phospho-D-ribosyl)imidazole-4-carboxylate. It participates in purine metabolism; IMP biosynthesis via de novo pathway; 5-amino-1-(5-phospho-D-ribosyl)imidazole-4-carboxylate from 5-amino-1-(5-phospho-D-ribosyl)imidazole (N5-CAIR route): step 2/2. Functionally, catalyzes the conversion of N5-carboxyaminoimidazole ribonucleotide (N5-CAIR) to 4-carboxy-5-aminoimidazole ribonucleotide (CAIR). This is N5-carboxyaminoimidazole ribonucleotide mutase from Pseudomonas aeruginosa (strain ATCC 15692 / DSM 22644 / CIP 104116 / JCM 14847 / LMG 12228 / 1C / PRS 101 / PAO1).